Here is a 427-residue protein sequence, read N- to C-terminus: Gamma-glutamyl phosphate reductase (427 aa).

The protein belongs to the gamma-glutamyl phosphate reductase family.

It is found in the cytoplasm. It carries out the reaction L-glutamate 5-semialdehyde + phosphate + NADP(+) = L-glutamyl 5-phosphate + NADPH + H(+). It functions in the pathway amino-acid biosynthesis; L-proline biosynthesis; L-glutamate 5-semialdehyde from L-glutamate: step 2/2. Its function is as follows. Catalyzes the NADPH-dependent reduction of L-glutamate 5-phosphate into L-glutamate 5-semialdehyde and phosphate. The product spontaneously undergoes cyclization to form 1-pyrroline-5-carboxylate. This Rhizobium etli (strain ATCC 51251 / DSM 11541 / JCM 21823 / NBRC 15573 / CFN 42) protein is Gamma-glutamyl phosphate reductase.